The following is a 177-amino-acid chain: Large ribosomal subunit protein uL6 (177 aa).

Belongs to the universal ribosomal protein uL6 family. Part of the 50S ribosomal subunit.

Its function is as follows. This protein binds to the 23S rRNA, and is important in its secondary structure. It is located near the subunit interface in the base of the L7/L12 stalk, and near the tRNA binding site of the peptidyltransferase center. The polypeptide is Large ribosomal subunit protein uL6 (Ruegeria pomeroyi (strain ATCC 700808 / DSM 15171 / DSS-3) (Silicibacter pomeroyi)).